A 299-amino-acid chain; its full sequence is ATP phosphoribosyltransferase (299 aa).

The protein belongs to the ATP phosphoribosyltransferase family. Long subfamily. In terms of assembly, equilibrium between an active dimeric form, an inactive hexameric form and higher aggregates. Interconversion between the various forms is largely reversible and is influenced by the natural substrates and inhibitors of the enzyme. Requires Mg(2+) as cofactor.

Its subcellular location is the cytoplasm. The catalysed reaction is 1-(5-phospho-beta-D-ribosyl)-ATP + diphosphate = 5-phospho-alpha-D-ribose 1-diphosphate + ATP. The protein operates within amino-acid biosynthesis; L-histidine biosynthesis; L-histidine from 5-phospho-alpha-D-ribose 1-diphosphate: step 1/9. Its activity is regulated as follows. Feedback inhibited by histidine. In terms of biological role, catalyzes the condensation of ATP and 5-phosphoribose 1-diphosphate to form N'-(5'-phosphoribosyl)-ATP (PR-ATP). Has a crucial role in the pathway because the rate of histidine biosynthesis seems to be controlled primarily by regulation of HisG enzymatic activity. This is ATP phosphoribosyltransferase from Blochmanniella pennsylvanica (strain BPEN).